A 66-amino-acid chain; its full sequence is uncharacterized protein (66 aa).

A signal peptide spans 1–19 (MRRLYRHLASFFLLPSCPG).

This is an uncharacterized protein from Saccharomyces cerevisiae (strain ATCC 204508 / S288c) (Baker's yeast).